The primary structure comprises 471 residues: Chitobiosyldiphosphodolichol beta-mannosyltransferase (471 aa).

The Lumenal portion of the chain corresponds to 1-31; it reads MDTSSVTMHTERACCHQAQRAVAAMLDKAPS. The helical transmembrane segment at 32-52 threads the bilayer; the sequence is WLIWTAVLYVGLPFMLYWAVP. Residues 53–126 are Cytoplasmic-facing; sequence YLFYHNKTKS…ALPGASNAGK (74 aa). Positions 127–147 form an intramembrane region, helical; the sequence is SLGQTARKVVLQTCHIVRQLW. The Cytoplasmic segment spans residues 148–471; that stretch reads ELRGCDYILI…MSELQVVRQS (324 aa).

The protein belongs to the glycosyltransferase group 1 family.

Its subcellular location is the endoplasmic reticulum membrane. The catalysed reaction is an N,N'-diacetylchitobiosyl-diphospho-di-trans,poly-cis-dolichol + GDP-alpha-D-mannose = a beta-D-Man-(1-&gt;4)-beta-D-GlcNAc-(1-&gt;4)-alpha-D-GlcNAc-diphospho-di-trans,poly-cis-dolichol + GDP + H(+). The protein operates within protein modification; protein glycosylation. Participates in the formation of the lipid-linked precursor oligosaccharide for N-glycosylation. Involved in assembling the dolichol-pyrophosphate-GlcNAc(2)-Man(5) intermediate on the cytoplasmic surface of the ER. The protein is Chitobiosyldiphosphodolichol beta-mannosyltransferase (ALG1) of Eremothecium gossypii (strain ATCC 10895 / CBS 109.51 / FGSC 9923 / NRRL Y-1056) (Yeast).